Here is a 164-residue protein sequence, read N- to C-terminus: Ribosome maturation factor RimP (164 aa).

It belongs to the RimP family.

It localises to the cytoplasm. Its function is as follows. Required for maturation of 30S ribosomal subunits. The protein is Ribosome maturation factor RimP of Cellvibrio japonicus (strain Ueda107) (Pseudomonas fluorescens subsp. cellulosa).